Here is a 122-residue protein sequence, read N- to C-terminus: Prefoldin subunit 1 (122 aa).

Residue Ala2 is modified to N-acetylalanine.

It belongs to the prefoldin subunit beta family. Heterohexamer of two PFD-alpha type and four PFD-beta type subunits.

In terms of biological role, binds specifically to cytosolic chaperonin (c-CPN) and transfers target proteins to it. Binds to nascent polypeptide chain and promotes folding in an environment in which there are many competing pathways for nonnative proteins. The chain is Prefoldin subunit 1 (Pfdn1) from Mus musculus (Mouse).